A 102-amino-acid polypeptide reads, in one-letter code: NADH-quinone oxidoreductase subunit K (102 aa).

A run of 3 helical transmembrane segments spans residues isoleucine 3–isoleucine 23, isoleucine 31–phenylalanine 51, and phenylalanine 66–phenylalanine 86.

This sequence belongs to the complex I subunit 4L family. NDH-1 is composed of 14 different subunits. Subunits NuoA, H, J, K, L, M, N constitute the membrane sector of the complex.

The protein localises to the cell inner membrane. The catalysed reaction is a quinone + NADH + 5 H(+)(in) = a quinol + NAD(+) + 4 H(+)(out). In terms of biological role, NDH-1 shuttles electrons from NADH, via FMN and iron-sulfur (Fe-S) centers, to quinones in the respiratory chain. The immediate electron acceptor for the enzyme in this species is believed to be ubiquinone. Couples the redox reaction to proton translocation (for every two electrons transferred, four hydrogen ions are translocated across the cytoplasmic membrane), and thus conserves the redox energy in a proton gradient. The polypeptide is NADH-quinone oxidoreductase subunit K (Rhodospirillum centenum (strain ATCC 51521 / SW)).